Reading from the N-terminus, the 225-residue chain is MKQIQIAIDGPASSGKSTVAKIIAKDLGYTYLDTGAMYRAATYLALQHQLTAADTEDIIRLLDDYSVSFGRSESGQQLVFVGDVDVTNPIRENDVTNNVSWVSAIPEVREKLVSLQQQIASQGGIVMDGRDIGTVVLPDAELKIFLVASVDERAERRYKENLERGISADLEVLKKEIADRDYKDSHRSVSPLRPADDSITFDTTGVSISDVVAFIEEKAKKILDK.

Residue 10-18 (GPASSGKST) coordinates ATP.

It belongs to the cytidylate kinase family. Type 1 subfamily.

It is found in the cytoplasm. It carries out the reaction CMP + ATP = CDP + ADP. It catalyses the reaction dCMP + ATP = dCDP + ADP. The chain is Cytidylate kinase from Streptococcus gordonii (strain Challis / ATCC 35105 / BCRC 15272 / CH1 / DL1 / V288).